A 263-amino-acid chain; its full sequence is Receptor-transporting protein 1 (263 aa).

The Cytoplasmic portion of the chain corresponds to 1–238; that stretch reads MRIFRPWRLR…ETGSGCNFCS (238 aa). The 3CxxC-type zinc-finger motif lies at 88-197; the sequence is ASGRFHCSWC…GEFCEACQEG (110 aa). Residues 239–259 form a helical membrane-spanning segment; sequence IPWCLFWATVLMLIIYLQFSF. Residues 260–263 lie on the Extracellular side of the membrane; it reads RTSV.

It belongs to the TMEM7 family. As to quaternary structure, interacts with olfactory receptors. Predominantly expressed in olfactory and vomeronasal organs, in mature olfactory sensory neurons.

The protein localises to the cell membrane. Functionally, specifically promotes functional cell surface expression of olfactory receptors, but not of other GPCRs. This chain is Receptor-transporting protein 1 (Rtp1), found in Mus musculus (Mouse).